A 373-amino-acid polypeptide reads, in one-letter code: Histidine protein methyltransferase 1 homolog (373 aa).

Residues 30-42 (SKESLVSERQKGT) show a composition bias toward basic and acidic residues. Disordered stretches follow at residues 30-52 (SKES…STEQ) and 64-94 (KSER…HEEK). Positions 70–88 (APSQDPDSSFGAANSSSNL) are enriched in polar residues. 2 positions are modified to phosphoserine: S72 and S77. A Tele-methylhistidine modification is found at H154. Residues 168–172 (IWECT), G195, and 216–218 (QDY) each bind S-adenosyl-L-methionine. The short motif at 247–253 (PDVKRLR) is the Nuclear localization signal element. Residues 269-271 (GEW) and S294 contribute to the S-adenosyl-L-methionine site.

The protein belongs to the methyltransferase superfamily. METTL18 family. As to quaternary structure, interacts with GRWD1 and members of the heat shock protein 90 and 70 families; these proteins may possibly be methylation substrates for the enzyme. Monomethylated at His-154 through automethylation. Automethylation at His-154 positively regulates the methyltransferase activity toward RPL3. Probably methylated on other residues.

It localises to the cytoplasm. Its subcellular location is the cytosol. The protein resides in the nucleus. It is found in the nucleolus. The enzyme catalyses L-histidyl-[protein] + S-adenosyl-L-methionine = N(tele)-methyl-L-histidyl-[protein] + S-adenosyl-L-homocysteine + H(+). Functionally, protein-L-histidine N-tele-methyltransferase that specifically monomethylates RPL3, thereby regulating translation elongation. Histidine methylation of RPL3 regulates translation elongation by slowing ribosome traversal on tyrosine codons: slower elongation provides enough time for proper folding of synthesized proteins and prevents cellular aggregation of tyrosine-rich proteins. This chain is Histidine protein methyltransferase 1 homolog (METTL18), found in Bos taurus (Bovine).